The following is a 349-amino-acid chain: Flagellar P-ring protein (349 aa).

The N-terminal stretch at 1–20 is a signal peptide; the sequence is MSKAIKILLPLLLFSLSLQA.

It belongs to the FlgI family. In terms of assembly, the basal body constitutes a major portion of the flagellar organelle and consists of four rings (L,P,S, and M) mounted on a central rod.

It is found in the periplasm. The protein resides in the bacterial flagellum basal body. In terms of biological role, assembles around the rod to form the L-ring and probably protects the motor/basal body from shearing forces during rotation. The chain is Flagellar P-ring protein from Wolinella succinogenes (strain ATCC 29543 / DSM 1740 / CCUG 13145 / JCM 31913 / LMG 7466 / NCTC 11488 / FDC 602W) (Vibrio succinogenes).